Consider the following 396-residue polypeptide: Elongation factor Tu (396 aa).

The region spanning 10–206 is the tr-type G domain; that stretch reads KPHVNIGTIG…AVDSYIPDPE (197 aa). The G1 stretch occupies residues 19 to 26; it reads GHVDHGKT. A GTP-binding site is contributed by 19 to 26; the sequence is GHVDHGKT. Thr-26 contacts Mg(2+). Positions 60–64 are G2; it reads GITIA. Residues 81-84 form a G3 region; that stretch reads DCPG. GTP contacts are provided by residues 81 to 85 and 136 to 139; these read DCPGH and NKAD. The G4 stretch occupies residues 136 to 139; the sequence is NKAD. Positions 174–176 are G5; that stretch reads SAL.

It belongs to the TRAFAC class translation factor GTPase superfamily. Classic translation factor GTPase family. EF-Tu/EF-1A subfamily. As to quaternary structure, monomer.

Its subcellular location is the cytoplasm. The catalysed reaction is GTP + H2O = GDP + phosphate + H(+). GTP hydrolase that promotes the GTP-dependent binding of aminoacyl-tRNA to the A-site of ribosomes during protein biosynthesis. The polypeptide is Elongation factor Tu (Pelobacter propionicus (strain DSM 2379 / NBRC 103807 / OttBd1)).